The chain runs to 294 residues: 4-hydroxy-tetrahydrodipicolinate synthase (294 aa).

Pyruvate is bound at residue T44. Y132 (proton donor/acceptor) is an active-site residue. K160 serves as the catalytic Schiff-base intermediate with substrate. Pyruvate is bound at residue V202.

This sequence belongs to the DapA family. As to quaternary structure, homotetramer; dimer of dimers.

It is found in the cytoplasm. The catalysed reaction is L-aspartate 4-semialdehyde + pyruvate = (2S,4S)-4-hydroxy-2,3,4,5-tetrahydrodipicolinate + H2O + H(+). It participates in amino-acid biosynthesis; L-lysine biosynthesis via DAP pathway; (S)-tetrahydrodipicolinate from L-aspartate: step 3/4. Its function is as follows. Catalyzes the condensation of (S)-aspartate-beta-semialdehyde [(S)-ASA] and pyruvate to 4-hydroxy-tetrahydrodipicolinate (HTPA). The chain is 4-hydroxy-tetrahydrodipicolinate synthase from Leptospira borgpetersenii serovar Hardjo-bovis (strain JB197).